We begin with the raw amino-acid sequence, 555 residues long: Hydroxylamine reductase (555 aa).

[4Fe-4S] cluster contacts are provided by Cys5, Cys8, Cys17, and Cys23. The hybrid [4Fe-2O-2S] cluster site is built by His248, Glu272, Cys316, Cys408, Cys436, Cys461, Glu496, and Lys498. Cys408 carries the post-translational modification Cysteine persulfide.

The protein belongs to the HCP family. It depends on [4Fe-4S] cluster as a cofactor. Hybrid [4Fe-2O-2S] cluster serves as cofactor.

It is found in the cytoplasm. It carries out the reaction A + NH4(+) + H2O = hydroxylamine + AH2 + H(+). Functionally, catalyzes the reduction of hydroxylamine to form NH(3) and H(2)O. This Halothermothrix orenii (strain H 168 / OCM 544 / DSM 9562) protein is Hydroxylamine reductase.